We begin with the raw amino-acid sequence, 726 residues long: Catalase-peroxidase (726 aa).

A cross-link (tryptophyl-tyrosyl-methioninium (Trp-Tyr) (with M-240)) is located at residues 91–214 (WHSAGTYRIA…LGAVQMGLIY (124 aa)). The Proton acceptor role is filled by His-92. Residues 214–240 (YVNPEGPNGNPDPLAAARDIRETFARM) constitute a cross-link (tryptophyl-tyrosyl-methioninium (Tyr-Met) (with W-91)). Residue His-255 participates in heme b binding. The tract at residues 335–362 (AHQWRPKAGAGADSVPDPHDPNKRRTPS) is disordered.

The protein belongs to the peroxidase family. Peroxidase/catalase subfamily. In terms of assembly, homodimer or homotetramer. Requires heme b as cofactor. Formation of the three residue Trp-Tyr-Met cross-link is important for the catalase, but not the peroxidase activity of the enzyme.

It carries out the reaction H2O2 + AH2 = A + 2 H2O. The enzyme catalyses 2 H2O2 = O2 + 2 H2O. Its function is as follows. Bifunctional enzyme with both catalase and broad-spectrum peroxidase activity. This Pseudomonas fluorescens (strain ATCC BAA-477 / NRRL B-23932 / Pf-5) protein is Catalase-peroxidase.